The sequence spans 556 residues: Arginine--tRNA ligase (556 aa).

A 'HIGH' region motif is present at residues 132–142 (ANPTGDLHLGH).

This sequence belongs to the class-I aminoacyl-tRNA synthetase family. Monomer.

It localises to the cytoplasm. It catalyses the reaction tRNA(Arg) + L-arginine + ATP = L-arginyl-tRNA(Arg) + AMP + diphosphate. The polypeptide is Arginine--tRNA ligase (Listeria monocytogenes serotype 4a (strain HCC23)).